Consider the following 213-residue polypeptide: ATP-dependent Clp protease proteolytic subunit 1 (213 aa).

Ser108 serves as the catalytic Nucleophile. His133 is a catalytic residue.

The protein belongs to the peptidase S14 family. As to quaternary structure, fourteen ClpP subunits assemble into 2 heptameric rings which stack back to back to give a disk-like structure with a central cavity, resembling the structure of eukaryotic proteasomes.

It localises to the cytoplasm. The catalysed reaction is Hydrolysis of proteins to small peptides in the presence of ATP and magnesium. alpha-casein is the usual test substrate. In the absence of ATP, only oligopeptides shorter than five residues are hydrolyzed (such as succinyl-Leu-Tyr-|-NHMec, and Leu-Tyr-Leu-|-Tyr-Trp, in which cleavage of the -Tyr-|-Leu- and -Tyr-|-Trp bonds also occurs).. Its function is as follows. Cleaves peptides in various proteins in a process that requires ATP hydrolysis. Has a chymotrypsin-like activity. Plays a major role in the degradation of misfolded proteins. The protein is ATP-dependent Clp protease proteolytic subunit 1 of Frankia casuarinae (strain DSM 45818 / CECT 9043 / HFP020203 / CcI3).